The chain runs to 208 residues: Thymidylate kinase (208 aa).

13–20 provides a ligand contact to ATP; that stretch reads GLEGAGKS.

This sequence belongs to the thymidylate kinase family.

The enzyme catalyses dTMP + ATP = dTDP + ADP. Its function is as follows. Phosphorylation of dTMP to form dTDP in both de novo and salvage pathways of dTTP synthesis. The chain is Thymidylate kinase from Shewanella amazonensis (strain ATCC BAA-1098 / SB2B).